We begin with the raw amino-acid sequence, 157 residues long: uncharacterized protein (157 aa).

This is an uncharacterized protein from Acidianus hospitalis (AFV-1).